The following is a 156-amino-acid chain: MAKTFKFIFYFWGAFVLVFVLDQWVKSLTLAGLRWQSEYLDLTYALNTGVAFSMLSFLEHNLKYLHLALIVVLFIYLFWQKTLLKTHSIAFGMMLGAGVSNLLDRFIHGGVVDMFFWHKWFNFAIFNVADVMINISVALILIQEIFKKRKKDDRMD.

3 consecutive transmembrane segments (helical) span residues 5 to 25, 64 to 84, and 89 to 109; these read FKFI…DQWV, YLHL…KTLL, and IAFG…FIHG. Active-site residues include aspartate 113 and aspartate 130. A helical transmembrane segment spans residues 122-142; sequence NFAIFNVADVMINISVALILI.

This sequence belongs to the peptidase A8 family.

It is found in the cell inner membrane. The catalysed reaction is Release of signal peptides from bacterial membrane prolipoproteins. Hydrolyzes -Xaa-Yaa-Zaa-|-(S,diacylglyceryl)Cys-, in which Xaa is hydrophobic (preferably Leu), and Yaa (Ala or Ser) and Zaa (Gly or Ala) have small, neutral side chains.. It functions in the pathway protein modification; lipoprotein biosynthesis (signal peptide cleavage). Functionally, this protein specifically catalyzes the removal of signal peptides from prolipoproteins. The chain is Lipoprotein signal peptidase from Campylobacter jejuni subsp. jejuni serotype O:6 (strain 81116 / NCTC 11828).